Reading from the N-terminus, the 334-residue chain is Ornithine carbamoyltransferase subunit F (334 aa).

Residues 56-59, Gln-83, Arg-107, and 134-137 each bind carbamoyl phosphate; these read STRT and HPTQ. L-ornithine contacts are provided by residues Asn-168, Asp-232, and 236–237; that span reads SM. Residues 274-275 and Arg-320 each bind carbamoyl phosphate; that span reads CL.

It belongs to the aspartate/ornithine carbamoyltransferase superfamily. OTCase family. In E.coli strain K12, trimer of identical or non-identical chains are composed of ArgI (I) and/or ArgF (F). The trimer has the following composition: FFI, FFF, FII, III. E.coli strains B and W, which are known to contain only ArgI, produce only a trimer of identical chains (III).

Its subcellular location is the cytoplasm. The enzyme catalyses carbamoyl phosphate + L-ornithine = L-citrulline + phosphate + H(+). The protein operates within amino-acid biosynthesis; L-arginine biosynthesis; L-arginine from L-ornithine and carbamoyl phosphate: step 1/3. Its function is as follows. Reversibly catalyzes the transfer of the carbamoyl group from carbamoyl phosphate (CP) to the N(epsilon) atom of ornithine (ORN) to produce L-citrulline, which is a substrate for argininosuccinate synthetase, the enzyme involved in the final step in arginine biosynthesis. This Escherichia coli (strain K12) protein is Ornithine carbamoyltransferase subunit F.